We begin with the raw amino-acid sequence, 382 residues long: V-set and immunoglobulin domain-containing protein 1 (382 aa).

The N-terminal stretch at 1 to 21 (MGLTFWKVFLILNCLAGQVNG) is a signal peptide. The 112-residue stretch at 22–133 (VQVTIPDSFV…FFGKNQGTIS (112 aa)) folds into the Ig-like V-type domain. Topologically, residues 22-234 (VQVTIPDSFV…DLTTPYPGIG (213 aa)) are extracellular. Asn-32 carries an N-linked (GlcNAc...) asparagine glycan. 2 cysteine pairs are disulfide-bonded: Cys-43/Cys-116 and Cys-161/Cys-211. The region spanning 140-227 (PSKPFCSIQG…GNSSCEIDLT (88 aa)) is the Ig-like C2-type domain. N-linked (GlcNAc...) asparagine glycosylation is found at Asn-200 and Asn-219. The chain crosses the membrane as a helical span at residues 235 to 255 (IIVGAFVGTLIGVIIIISVVW). Residues 256-382 (FVRRKVKAKG…FCDEEKVIKP (127 aa)) are Cytoplasmic-facing. Residues 266–382 (KERKRNSKTT…FCDEEKVIKP (117 aa)) are disordered. The segment covering 273–285 (KTTTELEPMTKIN) has biased composition (polar residues). A compositionally biased stretch (basic and acidic residues) spans 286–298 (QRTEGETMPREDA). The segment covering 327-341 (EPEPALQPTVEPPSG) has biased composition (pro residues).

It is found in the membrane. The protein is V-set and immunoglobulin domain-containing protein 1 (VSIG1) of Bos taurus (Bovine).